Here is a 623-residue protein sequence, read N- to C-terminus: Low affinity potassium transport system protein Kup (623 aa).

Helical transmembrane passes span 9 to 29 (LPAI…TSPL), 49 to 69 (VFGF…FKYL), 101 to 121 (VLVI…VITP), 137 to 157 (PSLD…LFMI), 163 to 183 (GMVG…LAVL), 212 to 232 (AVSF…EALY), 247 to 267 (WFSV…ALLL), 276 to 296 (PFFL…ATLA), 337 to 357 (IYIP…IVSF), 363 to 383 (LAAA…ILFA), 395 to 415 (ILVG…FSAN), and 419 to 439 (LFSG…IMTT).

This sequence belongs to the HAK/KUP transporter (TC 2.A.72) family.

It localises to the cell inner membrane. It carries out the reaction K(+)(in) + H(+)(in) = K(+)(out) + H(+)(out). Functionally, responsible for the low-affinity transport of potassium into the cell. Likely operates as a K(+):H(+) symporter. This is Low affinity potassium transport system protein Kup from Cronobacter sakazakii (strain ATCC BAA-894) (Enterobacter sakazakii).